The chain runs to 90 residues: Protein Z600 (90 aa).

Phosphothreonine is present on residues Thr22 and Thr48. A disordered region spans residues 46 to 65; sequence PATPSSSGHGKFQTELKKRR.

Component of the Frs-CycA-Cdk1 complex composed of Z600, CycA and Cdk1. Interacts preferentially with CycA (via C-terminus) but is also able to interact (via C-terminus) with CycE (via C-terminus).

It is found in the nucleus. Cell cycle regulator that is involved in modulating and adjusting cell proliferation according to the requirements of the developmental program. Interacts with mitotic Cdk1-cyclin complexes to inhibit mitotic entry at the G2/M transition. Likely to function by binding to the hydrophobic patch of cyclins to interfere with the interaction between the complex and certain Cdk1 substrates. At the mid-blastula transition, involved in the cell cycle arrest in G2 of cycle 14 by delaying mitosis and thus reducing cell proliferation allowing cell fate specification and morphogenesis to take place. Acts downstream or in parallel to the checkpoint regulator grp which is also required for the cell cycle pause at cycle 14. During gastrulation, delays mitosis in the ventral region of the embryonic mesoderm thus allowing invagination to be completed before cell division takes place. This chain is Protein Z600, found in Drosophila melanogaster (Fruit fly).